Reading from the N-terminus, the 287-residue chain is Ethylene-inducing xylanase 3 (287 aa).

The N-terminal stretch at 1 to 19 is a signal peptide; sequence MVCFSSLFVAASAIAVVFA. The 189-residue stretch at 31-219 folds into the GH11 domain; the sequence is QSTPSSQGTH…SSGSARINVA (189 aa). Glu115 functions as the Nucleophile in the catalytic mechanism. The active-site Proton donor is Glu206. The CBM1 domain maps to 252 to 287; that stretch reads SCAARWGQCGGSGWNGATCCSAGTCQAQNQWYSQCL.

The protein belongs to the glycosyl hydrolase 11 (cellulase G) family.

It catalyses the reaction Endohydrolysis of (1-&gt;4)-beta-D-xylosidic linkages in xylans.. Its pathway is glycan degradation; xylan degradation. In terms of biological role, endo-1,4-beta-xylanase involved in the hydrolysis of xylan, a major structural heterogeneous polysaccharide found in plant biomass representing the second most abundant polysaccharide in the biosphere, after cellulose. Exhibits immunity-inducing activity and induces cell death in Nicotiana benthamiana. This chain is Ethylene-inducing xylanase 3, found in Verticillium longisporum (Verticillium dahliae var. longisporum).